The primary structure comprises 407 residues: Arginine biosynthesis bifunctional protein ArgJ (407 aa).

Substrate contacts are provided by Thr-154, Lys-180, Thr-191, Glu-278, Asn-402, and Ser-407. Thr-191 functions as the Nucleophile in the catalytic mechanism.

It belongs to the ArgJ family. In terms of assembly, heterotetramer of two alpha and two beta chains.

The protein resides in the cytoplasm. It catalyses the reaction N(2)-acetyl-L-ornithine + L-glutamate = N-acetyl-L-glutamate + L-ornithine. The catalysed reaction is L-glutamate + acetyl-CoA = N-acetyl-L-glutamate + CoA + H(+). It functions in the pathway amino-acid biosynthesis; L-arginine biosynthesis; L-ornithine and N-acetyl-L-glutamate from L-glutamate and N(2)-acetyl-L-ornithine (cyclic): step 1/1. Its pathway is amino-acid biosynthesis; L-arginine biosynthesis; N(2)-acetyl-L-ornithine from L-glutamate: step 1/4. In terms of biological role, catalyzes two activities which are involved in the cyclic version of arginine biosynthesis: the synthesis of N-acetylglutamate from glutamate and acetyl-CoA as the acetyl donor, and of ornithine by transacetylation between N(2)-acetylornithine and glutamate. This chain is Arginine biosynthesis bifunctional protein ArgJ, found in Psychrobacter arcticus (strain DSM 17307 / VKM B-2377 / 273-4).